A 202-amino-acid chain; its full sequence is uncharacterized protein (202 aa).

This is an uncharacterized protein from Dictyostelium discoideum (Social amoeba).